The primary structure comprises 80 residues: MKKQWKPVDSRLNELMHEYSVSIEDLVECTGLSKQRINDYVGGFKSNMNIGTAMTFADAIGCSIEELYVWNFKERRQLTK.

The 56-residue stretch at 12–67 (LNELMHEYSVSIEDLVECTGLSKQRINDYVGGFKSNMNIGTAMTFADAIGCSIEEL) folds into the HTH cro/C1-type domain. Residues 23 to 42 (IEDLVECTGLSKQRINDYVG) constitute a DNA-binding region (H-T-H motif).

The polypeptide is SPbeta prophage-derived uncharacterized HTH-type transcriptional regulator YotL (yotL) (Bacillus subtilis (strain 168)).